We begin with the raw amino-acid sequence, 188 residues long: Probable nicotinate-nucleotide adenylyltransferase (188 aa).

This sequence belongs to the NadD family.

The enzyme catalyses nicotinate beta-D-ribonucleotide + ATP + H(+) = deamido-NAD(+) + diphosphate. The protein operates within cofactor biosynthesis; NAD(+) biosynthesis; deamido-NAD(+) from nicotinate D-ribonucleotide: step 1/1. Catalyzes the reversible adenylation of nicotinate mononucleotide (NaMN) to nicotinic acid adenine dinucleotide (NaAD). This chain is Probable nicotinate-nucleotide adenylyltransferase, found in Listeria welshimeri serovar 6b (strain ATCC 35897 / DSM 20650 / CCUG 15529 / CIP 8149 / NCTC 11857 / SLCC 5334 / V8).